Reading from the N-terminus, the 332-residue chain is Ribosomal RNA small subunit methyltransferase H (332 aa).

Residues 37–39 (GGY), Asp-55, Phe-82, Asp-103, and Gln-110 contribute to the S-adenosyl-L-methionine site. Positions 281–332 (TKRPVTPSDEETAANPRARSAKLRAGERTAAPAQPEAPLPHWPTLASVMGRR) are disordered.

Belongs to the methyltransferase superfamily. RsmH family.

The protein localises to the cytoplasm. It carries out the reaction cytidine(1402) in 16S rRNA + S-adenosyl-L-methionine = N(4)-methylcytidine(1402) in 16S rRNA + S-adenosyl-L-homocysteine + H(+). Its function is as follows. Specifically methylates the N4 position of cytidine in position 1402 (C1402) of 16S rRNA. The polypeptide is Ribosomal RNA small subunit methyltransferase H (Rhodopseudomonas palustris (strain BisA53)).